Here is a 576-residue protein sequence, read N- to C-terminus: Probable DNA ligase (576 aa).

E235 contributes to the ATP binding site. K237 acts as the N6-AMP-lysine intermediate in catalysis. Residues R242, R257, E285, F324, R422, and K428 each coordinate ATP.

It belongs to the ATP-dependent DNA ligase family. It depends on Mg(2+) as a cofactor.

The catalysed reaction is ATP + (deoxyribonucleotide)n-3'-hydroxyl + 5'-phospho-(deoxyribonucleotide)m = (deoxyribonucleotide)n+m + AMP + diphosphate.. Its function is as follows. DNA ligase that seals nicks in double-stranded DNA during DNA replication, DNA recombination and DNA repair. The polypeptide is Probable DNA ligase (Koribacter versatilis (strain Ellin345)).